The sequence spans 252 residues: MSGHNKWANIKHRKAAQDAKRSKIFTKLIREIIVAAREGGGNPDTNPRLRAVLEKAREANMPKDTVERSIKKGTGELEGEKYEEIIYEAYAPGGVALYILALTDNKNRTAQELRHILSKNGGSLAESGSVAWIFERKGAIEISASKISDMDEFTLLAIDAGAEDIEEGDPVIVYVAPESLTAVKEALAKNGFEGESKITYKPKNTVKVTGSDAEKVLKLIDALEDNDDVQEVFGNFDIDDAELEAIMAKLEG.

This sequence belongs to the TACO1 family.

It localises to the cytoplasm. The sequence is that of Probable transcriptional regulatory protein Fnod_1106 from Fervidobacterium nodosum (strain ATCC 35602 / DSM 5306 / Rt17-B1).